Consider the following 237-residue polypeptide: BTB/POZ domain-containing protein KCTD6 (237 aa).

The BTB domain occupies 12–81 (HPVTLNVGGH…LRTSELTLPV (70 aa)).

As to quaternary structure, homopentamer. May be part of a cullin-containing E3 ubiquitin-protein ligase complex.

The protein operates within protein modification; protein ubiquitination. In terms of biological role, probable substrate-specific adapter of a cullin-containing E3 ubiquitin-protein ligase complex mediating the ubiquitination and subsequent proteasomal degradation of target proteins. In Danio rerio (Zebrafish), this protein is BTB/POZ domain-containing protein KCTD6 (kctd6).